The following is a 255-amino-acid chain: Expansin-A25 (255 aa).

The N-terminal stretch at 1 to 26 (MEYAILFATSLVITVLAASGFAPAHG) is a signal peptide. Residues 45–160 (GGACGYGNLY…QQVKCWRQGG (116 aa)) form the Expansin-like EG45 domain. The region spanning 170–249 (FFELVLVSNV…WWSFGMTFTS (80 aa)) is the Expansin-like CBD domain.

It belongs to the expansin family. Expansin A subfamily. Expressed in panicles and flowers.

It is found in the secreted. It localises to the cell wall. The protein resides in the membrane. Its function is as follows. May cause loosening and extension of plant cell walls by disrupting non-covalent bonding between cellulose microfibrils and matrix glucans. No enzymatic activity has been found. May be required for rapid internodal elongation in deepwater rice during submergence. The polypeptide is Expansin-A25 (EXPA25) (Oryza sativa subsp. japonica (Rice)).